The chain runs to 151 residues: Myosin light polypeptide 6 (151 aa).

Cysteine 2 carries the post-translational modification N-acetylcysteine. EF-hand domains lie at 7–42 (EQTA…LGQN), 84–119 (GCFE…LGEK), and 119–151 (KMTE…VLSG).

In terms of assembly, myosin is a hexamer of 2 heavy chains and 4 light chains.

Functionally, regulatory light chain of myosin. Does not bind calcium. The chain is Myosin light polypeptide 6 (MYL6) from Gallus gallus (Chicken).